A 205-amino-acid chain; its full sequence is Peroxynitrite isomerase (205 aa).

The interval 1 to 23 (MTEPDPAAAEQRPSVGRNLPTFQ) is disordered. Residues 52–58 (GVWRGEG) carry the GXWXGXG motif. Residues Thr63, Lys168, and His195 each contribute to the heme b site.

It belongs to the nitrobindin family. In terms of assembly, homodimer. Heme b serves as cofactor.

It carries out the reaction peroxynitrite = nitrate. Its pathway is nitrogen metabolism. Heme-binding protein able to scavenge peroxynitrite and to protect free L-tyrosine against peroxynitrite-mediated nitration, by acting as a peroxynitrite isomerase that converts peroxynitrite to nitrate. Therefore, this protein likely plays a role in peroxynitrite sensing and in the detoxification of reactive nitrogen and oxygen species (RNS and ROS, respectively). Is able to bind nitric oxide (NO) in vitro, but may act as a sensor of peroxynitrite levels in vivo. The sequence is that of Peroxynitrite isomerase from Mycobacteroides abscessus (strain ATCC 19977 / DSM 44196 / CCUG 20993 / CIP 104536 / JCM 13569 / NCTC 13031 / TMC 1543 / L948) (Mycobacterium abscessus).